A 179-amino-acid chain; its full sequence is ATP synthase subunit delta (179 aa).

This sequence belongs to the ATPase delta chain family. F-type ATPases have 2 components, F(1) - the catalytic core - and F(0) - the membrane proton channel. F(1) has five subunits: alpha(3), beta(3), gamma(1), delta(1), epsilon(1). F(0) has three main subunits: a(1), b(2) and c(10-14). The alpha and beta chains form an alternating ring which encloses part of the gamma chain. F(1) is attached to F(0) by a central stalk formed by the gamma and epsilon chains, while a peripheral stalk is formed by the delta and b chains.

It is found in the cell membrane. Functionally, f(1)F(0) ATP synthase produces ATP from ADP in the presence of a proton or sodium gradient. F-type ATPases consist of two structural domains, F(1) containing the extramembraneous catalytic core and F(0) containing the membrane proton channel, linked together by a central stalk and a peripheral stalk. During catalysis, ATP synthesis in the catalytic domain of F(1) is coupled via a rotary mechanism of the central stalk subunits to proton translocation. In terms of biological role, this protein is part of the stalk that links CF(0) to CF(1). It either transmits conformational changes from CF(0) to CF(1) or is implicated in proton conduction. This chain is ATP synthase subunit delta, found in Listeria monocytogenes serotype 4b (strain CLIP80459).